Consider the following 217-residue polypeptide: MANKEEIIAKAKEAITDFDDELAEEVANEALAAGIDPVELIEKGFTAGMEEVGEKFGQGELFLPHVLAAAEAMNSGIKVITPEMEKRKSQTKSLGTVAIGTIEGDIHSIGKDIVASMLNIAGFKVVDLGRDVPINTFVEKVKELKPQVVASSALMTTTMVNQIQIEEQLKEAGVRDQVKTMVGGAPVTQDWADKIGADIYGESANDAVAKVKAALNV.

One can recognise a B12-binding N-terminal domain in the interval 1–92 (MANKEEIIAK…EMEKRKSQTK (92 aa)). The region spanning 94-217 (LGTVAIGTIE…VAKVKAALNV (124 aa)) is the B12-binding domain. A methylcob(III)alamin-binding site is contributed by His-107.

Belongs to the methylamine corrinoid protein family. In terms of assembly, can form a complex with MttB.

It functions in the pathway one-carbon metabolism; methanogenesis from trimethylamine. Acts probably as a methyl group carrier between MttB and either MtbA or MtaA. The protein is Trimethylamine corrinoid protein of Methanosarcina barkeri.